An 875-amino-acid chain; its full sequence is Serine/threonine-protein phosphatase 4 regulatory subunit 4 (875 aa).

HEAT repeat units lie at residues 215-253 (ILPL…TKNV) and 254-292 (VLPE…RSQT). Positions 686 to 730 (MFQKKNYEKDLLDQEKEREELLFLEMEQLEKEKHQSDGRLASDKS) form a coiled coil. A compositionally biased stretch (basic and acidic residues) spans 718 to 739 (KHQSDGRLASDKSFEKKRRDSR). The tract at residues 718 to 773 (KHQSDGRLASDKSFEKKRRDSRTSTQSLSKNLPISVPGPSSSTASTSKEIKKSKLT) is disordered. Positions 740 to 764 (TSTQSLSKNLPISVPGPSSSTASTS) are enriched in polar residues. Position 777 is a phosphoserine (serine 777). Residue threonine 799 is modified to Phosphothreonine. Residues 825-859 (RNASSVPASFSPNPVMPSTSRGPGNTADPKSSGSK) show a composition bias toward polar residues. The segment at 825–875 (RNASSVPASFSPNPVMPSTSRGPGNTADPKSSGSKDAQPRKATLKSRKSNP) is disordered. Residues 866 to 875 (ATLKSRKSNP) show a composition bias toward basic residues.

Serine/threonine-protein phosphatase 4 (PP4) occurs in different assemblies of the catalytic and one or more regulatory subunits. Component of the PP4 complex PPP4C-PPP4R4.

It is found in the cytoplasm. In terms of biological role, putative regulatory subunit of serine/threonine-protein phosphatase 4. In Mus musculus (Mouse), this protein is Serine/threonine-protein phosphatase 4 regulatory subunit 4 (Ppp4r4).